The following is a 624-amino-acid chain: Penicillin-binding protein 4 (624 aa).

Residues 1–21 (MTMLRKIIGWILLLCIIPLFA) form the signal peptide. E96 functions as the Proton donor; for transglycosylase activity in the catalytic mechanism. The active-site Acyl-ester intermediate; for transpeptidase activity is S388.

It in the N-terminal section; belongs to the glycosyltransferase 51 family. The protein in the C-terminal section; belongs to the transpeptidase family. Post-translationally, the N-terminus is blocked.

It localises to the cell membrane. It catalyses the reaction [GlcNAc-(1-&gt;4)-Mur2Ac(oyl-L-Ala-gamma-D-Glu-L-Lys-D-Ala-D-Ala)](n)-di-trans,octa-cis-undecaprenyl diphosphate + beta-D-GlcNAc-(1-&gt;4)-Mur2Ac(oyl-L-Ala-gamma-D-Glu-L-Lys-D-Ala-D-Ala)-di-trans,octa-cis-undecaprenyl diphosphate = [GlcNAc-(1-&gt;4)-Mur2Ac(oyl-L-Ala-gamma-D-Glu-L-Lys-D-Ala-D-Ala)](n+1)-di-trans,octa-cis-undecaprenyl diphosphate + di-trans,octa-cis-undecaprenyl diphosphate + H(+). It carries out the reaction Preferential cleavage: (Ac)2-L-Lys-D-Ala-|-D-Ala. Also transpeptidation of peptidyl-alanyl moieties that are N-acyl substituents of D-alanine.. Functionally, cell wall formation. Synthesis of cross-linked peptidoglycan from the lipid intermediates. The enzyme has a penicillin-insensitive transglycosylase N-terminal domain (formation of linear glycan strands) and a penicillin-sensitive transpeptidase C-terminal domain (cross-linking of the peptide subunits). Has a partially redundant function with PBP-2A (pbpA) during spore outgrowth. The chain is Penicillin-binding protein 4 from Bacillus subtilis (strain 168).